A 737-amino-acid polypeptide reads, in one-letter code: MKQIDSEDSITVPNDTPEDNSASSMQPVMSNLSIEEHQSENEPIEQEQADAKDPLLSKYHLACQQGDLATVKEIIENGVIDLKHDYDDVERVSGLHWASINNRLSVVRYLISKDVDVNFQGGELNATPLHWAARYGYVYIVDYLLEHGADPSVTDAQGFNLLHLSINSSNIMLVIYVLFFVIDDKLDIDCVDPNGRTALLWAAYQGDSLSVETLLKFRASVKATDKGGFTPLHWGTVKGQAQVLKHLIENGADFFQKTADGKNCFAIAHDMNTTGSLVGALYQCGFNKEGFAIPVYFKKSLHTKLVTFFAPWIFIGVLFKCFASIHPIFSLIFSILLGLGMRYTLKKYVIPAYAQRNTRQSFLKTPFLAGVFSGSVFWASYTWLTRIMPLTLIEEPITNLLFFAGVVLLASLFVKLVRSDPGLIPEETDHSKVKETIKELLNVGKFDAKHFCISTWVRKPIRSKFSNFSRALVTRFDHFCPWIYNDIGLRNHKTFLFFILCLETCIFVFLKLCMEYFDVLEDTFEDDYDLNCGIFGEDLCAGFFFDTFTFLVLAWTCFQGIWVGFLTFVQLFQTAKGVTNYEFSTLSKRRHNHDSSVNEYFTTTPLELIDEEEADPLNPVIPGNNPRDPLMQKSRTCFGICWTLTGLDQFVMVIKETFGVAQREEPRNNILSFKISTDYGWRTNLKDFWLTSDITAPTWQRFLYSPSCSKALLNGEEVDYFKLYKLPERHYLAEEIV.

A disordered region spans residues 1–47 (MKQIDSEDSITVPNDTPEDNSASSMQPVMSNLSIEEHQSENEPIEQE). The Cytoplasmic segment spans residues 1-304 (MKQIDSEDSI…VYFKKSLHTK (304 aa)). Positions 9-33 (SITVPNDTPEDNSASSMQPVMSNLS) are enriched in polar residues. ANK repeat units follow at residues 54 to 84 (PLLS…DLKH), 90 to 119 (ERVS…DVNF), 124 to 153 (LNAT…DPSV), 157 to 190 (QGFN…DIDC), 194 to 223 (NGRT…SVKA), and 227 to 256 (GGFT…DFFQ). Transmembrane regions (helical) follow at residues 305 to 325 (LVTF…FASI) and 326 to 346 (HPIF…YTLK). Over 347 to 364 (KYVIPAYAQRNTRQSFLK) the chain is Cytoplasmic. A helical membrane pass occupies residues 365-385 (TPFLAGVFSGSVFWASYTWLT). Over 386–396 (RIMPLTLIEEP) the chain is Lumenal. The helical transmembrane segment at 397–417 (ITNLLFFAGVVLLASLFVKLV) threads the bilayer. Residues 418 to 493 (RSDPGLIPEE…YNDIGLRNHK (76 aa)) lie on the Cytoplasmic side of the membrane. A DHHC domain is found at 450–500 (HFCISTWVRKPIRSKFSNFSRALVTRFDHFCPWIYNDIGLRNHKTFLFFIL). Cys-480 serves as the catalytic S-palmitoyl cysteine intermediate. The helical transmembrane segment at 494–514 (TFLFFILCLETCIFVFLKLCM) threads the bilayer. The Lumenal portion of the chain corresponds to 515–547 (EYFDVLEDTFEDDYDLNCGIFGEDLCAGFFFDT). The helical transmembrane segment at 548 to 568 (FTFLVLAWTCFQGIWVGFLTF) threads the bilayer. The Cytoplasmic portion of the chain corresponds to 569 to 737 (VQLFQTAKGV…ERHYLAEEIV (169 aa)).

It belongs to the DHHC palmitoyltransferase family. AKR/ZDHHC17 subfamily.

The protein resides in the early endosome membrane. It localises to the golgi apparatus membrane. The enzyme catalyses L-cysteinyl-[protein] + hexadecanoyl-CoA = S-hexadecanoyl-L-cysteinyl-[protein] + CoA. In terms of biological role, palmitoyltransferase specific for casein kinase 1. The sequence is that of Palmitoyltransferase AKR1 (AKR1) from Lachancea kluyveri (strain ATCC 58438 / CBS 3082 / BCRC 21498 / NBRC 1685 / JCM 7257 / NCYC 543 / NRRL Y-12651) (Yeast).